Here is a 472-residue protein sequence, read N- to C-terminus: Calcitonin gene-related peptide type 1 receptor (472 aa).

The N-terminal stretch at 1 to 28 (MGLLLRSALFKYIIIVLIMLNLRGYVLA) is a signal peptide. Residues 29-149 (EQEQGSQIPL…FTHEKVKTAL (121 aa)) are Extracellular-facing. Disulfide bonds link Cys-58/Cys-84, Cys-75/Cys-115, and Cys-98/Cys-137. Residues Asn-76, Asn-128, and Asn-133 are each glycosylated (N-linked (GlcNAc...) asparagine). The helical transmembrane segment at 150–174 (NLYYLTIIGHGLSIASLLISLGIFF) threads the bilayer. The Cytoplasmic segment spans residues 175–185 (YFKNLSCQRIT). Residues 186-208 (LHKNLFFSFVCNSIITIISLSAV) form a helical membrane-spanning segment. Residues 209–219 (ANNQALVATNP) lie on the Extracellular side of the membrane. Residues 220-248 (VSCKISQFIHLYLMGCNYFWMLCEGIYLH) form a helical membrane-spanning segment. The Cytoplasmic segment spans residues 249-262 (TLIVVAVFAEKQHL). The chain crosses the membrane as a helical span at residues 263–283 (MWYYLLGWGFPLIPACIHAVA). The Extracellular portion of the chain corresponds to 284–299 (RSLYYNDNCWISSETH). Residues 300–324 (LLYIIHGPICAALLVNLFFLLNIVR) traverse the membrane as a helical segment. Residues 325-339 (VLITKLKVTHQAESN) are Cytoplasmic-facing. A helical membrane pass occupies residues 340-361 (LYMKAVRATLILVPLLGIEFVL). Topologically, residues 362 to 376 (FPWKPEGRIAEEIYD) are extracellular. A helical transmembrane segment spans residues 377 to 397 (YVMHILMHYQGLLVATIFCFF). At 398-472 (NGEVQAVLKR…VFFKTEKQYM (75 aa)) the chain is on the cytoplasmic side.

Belongs to the G-protein coupled receptor 2 family.

It localises to the cell membrane. May function as G protein-coupled receptor for calcitonin-gene-related peptides and adrenomedullin. Specificity may be modulated by accessory proteins. May activate cAMP-dependent pathway. The chain is Calcitonin gene-related peptide type 1 receptor (calcrl) from Xenopus tropicalis (Western clawed frog).